A 335-amino-acid chain; its full sequence is Tryptophan--tRNA ligase (335 aa).

ATP contacts are provided by residues 19–21 (QPS) and 28–29 (GN). Residues 20-29 (PSSGMLHLGN) carry the 'HIGH' region motif. Asp143 contacts L-tryptophan. Residues 155 to 157 (GAD), Ile192, and 201 to 205 (KMSKS) each bind ATP. Residues 201 to 205 (KMSKS) carry the 'KMSKS' region motif.

Belongs to the class-I aminoacyl-tRNA synthetase family. In terms of assembly, homodimer.

The protein resides in the cytoplasm. The enzyme catalyses tRNA(Trp) + L-tryptophan + ATP = L-tryptophyl-tRNA(Trp) + AMP + diphosphate + H(+). Functionally, catalyzes the attachment of tryptophan to tRNA(Trp). The protein is Tryptophan--tRNA ligase of Tropheryma whipplei (strain TW08/27) (Whipple's bacillus).